The sequence spans 430 residues: Trigger factor (430 aa).

Positions 157 to 242 (GDLVALETWS…AVEVSEPVLP (86 aa)) constitute a PPIase FKBP-type domain.

It belongs to the FKBP-type PPIase family. Tig subfamily.

It localises to the cytoplasm. It catalyses the reaction [protein]-peptidylproline (omega=180) = [protein]-peptidylproline (omega=0). In terms of biological role, involved in protein export. Acts as a chaperone by maintaining the newly synthesized protein in an open conformation. Functions as a peptidyl-prolyl cis-trans isomerase. The polypeptide is Trigger factor (Xanthomonas oryzae pv. oryzae (strain MAFF 311018)).